The chain runs to 171 residues: Co-chaperone protein HscB homolog (171 aa).

A J domain is found at 3–75; it reads SHFALFDLEP…SQRARYLLSL (73 aa).

The protein belongs to the HscB family. Interacts with HscA and stimulates its ATPase activity.

Its function is as follows. Co-chaperone involved in the maturation of iron-sulfur cluster-containing proteins. Seems to help targeting proteins to be folded toward HscA. The sequence is that of Co-chaperone protein HscB homolog from Azotobacter vinelandii.